The sequence spans 134 residues: Profilin-4 (134 aa).

The cysteines at positions 13 and 118 are disulfide-linked. Residues 84–100 (AVIRGKKGSGGITIKKT) carry the Involved in PIP2 interaction motif. T114 carries the post-translational modification Phosphothreonine.

Belongs to the profilin family. In terms of assembly, occurs in many kinds of cells as a complex with monomeric actin in a 1:1 ratio. Post-translationally, phosphorylated by MAP kinases.

The protein resides in the cytoplasm. It is found in the cytoskeleton. Its function is as follows. Binds to actin and affects the structure of the cytoskeleton. At high concentrations, profilin prevents the polymerization of actin, whereas it enhances it at low concentrations. In Olea europaea (Common olive), this protein is Profilin-4.